The following is a 335-amino-acid chain: Serpentine receptor class XA 10 (335 aa).

The Extracellular segment spans residues 1–10 (MDVDAAVVKR). A helical transmembrane segment spans residues 11–31 (IALWVYETCSVFNLFYCITLS). Residues 32 to 46 (LAIKTSKNNALPATY) lie on the Cytoplasmic side of the membrane. The chain crosses the membrane as a helical span at residues 47 to 67 (IYNMAISNALLVIFGIMVYIL). At 68 to 82 (PYYMSDKTYKTYRDS) the chain is on the extracellular side. Residues 83–103 (IGAMISVGVTFNYLHPMLTLI) traverse the membrane as a helical segment. Residues 104–126 (LMTINRIAVVVSMQASQLFTSSK) are Cytoplasmic-facing. A helical transmembrane segment spans residues 127 to 147 (IWLYTSFHMTANFACLIIPYL). The Extracellular segment spans residues 148 to 177 (SECRINYDIRKVGFISECAPDRHQITTFSN). Residues 178–198 (YYSVFFPFVAFFFNVLVIINF) form a helical membrane-spanning segment. Residues 199–238 (KLQRSPTYTKIKNMFRRGNGDQFTSMPSDVLKAKKKTERM) lie on the Cytoplasmic side of the membrane. The helical transmembrane segment at 239-259 (LMIQAFITAFYLSVYELTSLV) threads the bilayer. Topologically, residues 260-276 (LRVVPELFGNLSLDGKL) are extracellular. Residues 277-297 (AFTYFRLAQVPCHVFLVYFIF) form a helical membrane-spanning segment. At 298–319 (TPVTRKIYMDFVRERVFCMKPA) the chain is on the cytoplasmic side.

Belongs to the nematode receptor-like protein srxa family.

It localises to the membrane. The chain is Serpentine receptor class XA 10 (srxa-10) from Caenorhabditis elegans.